Consider the following 147-residue polypeptide: D-aminoacyl-tRNA deacylase (147 aa).

Residues 137 to 138 (GP) carry the Gly-cisPro motif, important for rejection of L-amino acids motif.

This sequence belongs to the DTD family. In terms of assembly, homodimer.

The protein resides in the cytoplasm. The enzyme catalyses glycyl-tRNA(Ala) + H2O = tRNA(Ala) + glycine + H(+). It carries out the reaction a D-aminoacyl-tRNA + H2O = a tRNA + a D-alpha-amino acid + H(+). Its function is as follows. An aminoacyl-tRNA editing enzyme that deacylates mischarged D-aminoacyl-tRNAs. Also deacylates mischarged glycyl-tRNA(Ala), protecting cells against glycine mischarging by AlaRS. Acts via tRNA-based rather than protein-based catalysis; rejects L-amino acids rather than detecting D-amino acids in the active site. By recycling D-aminoacyl-tRNA to D-amino acids and free tRNA molecules, this enzyme counteracts the toxicity associated with the formation of D-aminoacyl-tRNA entities in vivo and helps enforce protein L-homochirality. This chain is D-aminoacyl-tRNA deacylase, found in Jannaschia sp. (strain CCS1).